The following is a 295-amino-acid chain: 4-diphosphocytidyl-2-C-methyl-D-erythritol kinase (295 aa).

Residue lysine 22 is part of the active site. 106–116 is a binding site for ATP; the sequence is PAGGGFGGGSS. The active site involves aspartate 148.

Belongs to the GHMP kinase family. IspE subfamily.

It catalyses the reaction 4-CDP-2-C-methyl-D-erythritol + ATP = 4-CDP-2-C-methyl-D-erythritol 2-phosphate + ADP + H(+). It functions in the pathway isoprenoid biosynthesis; isopentenyl diphosphate biosynthesis via DXP pathway; isopentenyl diphosphate from 1-deoxy-D-xylulose 5-phosphate: step 3/6. Functionally, catalyzes the phosphorylation of the position 2 hydroxy group of 4-diphosphocytidyl-2C-methyl-D-erythritol. The polypeptide is 4-diphosphocytidyl-2-C-methyl-D-erythritol kinase (Xanthomonas euvesicatoria pv. vesicatoria (strain 85-10) (Xanthomonas campestris pv. vesicatoria)).